Consider the following 188-residue polypeptide: A-type ATP synthase subunit E (188 aa).

This sequence belongs to the V-ATPase E subunit family. As to quaternary structure, has multiple subunits with at least A(3), B(3), C, D, E, F, H, I and proteolipid K(x).

Its subcellular location is the cell membrane. In terms of biological role, component of the A-type ATP synthase that produces ATP from ADP in the presence of a proton gradient across the membrane. The sequence is that of A-type ATP synthase subunit E from Archaeoglobus fulgidus (strain ATCC 49558 / DSM 4304 / JCM 9628 / NBRC 100126 / VC-16).